The primary structure comprises 201 residues: Small ribosomal subunit protein uS4 (201 aa).

The interval 27–47 (SKKNYPPGQHGNSRKRKTSEY) is disordered. An S4 RNA-binding domain is found at 92-152 (GRLDNVVYRL…EKSKSMEVIA (61 aa)).

Belongs to the universal ribosomal protein uS4 family. Part of the 30S ribosomal subunit. Contacts protein S5. The interaction surface between S4 and S5 is involved in control of translational fidelity.

Its function is as follows. One of the primary rRNA binding proteins, it binds directly to 16S rRNA where it nucleates assembly of the body of the 30S subunit. With S5 and S12 plays an important role in translational accuracy. In Parabacteroides distasonis (strain ATCC 8503 / DSM 20701 / CIP 104284 / JCM 5825 / NCTC 11152), this protein is Small ribosomal subunit protein uS4.